The primary structure comprises 433 residues: GTPase Der (433 aa).

EngA-type G domains are found at residues 3–167 (NRVV…KEEK) and 175–347 (IKVA…KDYT). Residues 9-16 (GRPNVGKS), 56-60 (DTGGL), 119-122 (NKID), 181-188 (GRPNVGKS), 228-232 (DTAGV), and 293-296 (NKMD) each bind GTP. The KH-like domain occupies 348 to 432 (KQHKTSFVNR…PIKLVIKGRE (85 aa)).

It belongs to the TRAFAC class TrmE-Era-EngA-EngB-Septin-like GTPase superfamily. EngA (Der) GTPase family. Associates with the 50S ribosomal subunit.

Functionally, GTPase that plays an essential role in the late steps of ribosome biogenesis. The sequence is that of GTPase Der from Aquifex aeolicus (strain VF5).